A 621-amino-acid polypeptide reads, in one-letter code: Glucose 1,6-bisphosphate synthase (621 aa).

Alpha-D-glucose 1,6-bisphosphate contacts are provided by arginine 73 and serine 175. Serine 175 (phosphoserine intermediate) is an active-site residue. Serine 175, aspartate 332, aspartate 334, and aspartate 336 together coordinate Mg(2+). A Phosphoserine modification is found at serine 175. The alpha-D-glucose 1,6-bisphosphate site is built by aspartate 336, arginine 337, glutamate 433, serine 435, and lysine 447.

Belongs to the phosphohexose mutase family. Expressed at highest levels in the brain and testis, at intermediate levels in thymus, spleen, lung and skeletal muscle, and at lowest levels in kidney, liver and heart.

The protein resides in the cytoplasm. It is found in the cytosol. The catalysed reaction is (2R)-3-phospho-glyceroyl phosphate + alpha-D-glucose 1-phosphate = alpha-D-glucose 1,6-bisphosphate + (2R)-3-phosphoglycerate + H(+). It carries out the reaction alpha-D-glucose 6-phosphate + (2R)-3-phospho-glyceroyl phosphate = alpha-D-glucose 1,6-bisphosphate + (2R)-3-phosphoglycerate + H(+). The enzyme catalyses (2R)-3-phospho-glyceroyl phosphate + alpha-D-ribose 1-phosphate = alpha-D-ribose 1,5-bisphosphate + (2R)-3-phosphoglycerate + H(+). It catalyses the reaction 2-deoxy-alpha-D-ribose 1-phosphate + (2R)-3-phospho-glyceroyl phosphate = 2-deoxy-alpha-D-ribose 1,5-bisphosphate + (2R)-3-phosphoglycerate + H(+). The catalysed reaction is (2R)-3-phospho-glyceroyl phosphate + alpha-D-mannose 1-phosphate = alpha-D-mannose 1,6-bisphosphate + (2R)-3-phosphoglycerate + H(+). Its function is as follows. Glucose 1,6-bisphosphate synthase using 1,3-bisphosphoglycerate as a phosphate donor and a series of 1-phosphate sugars, including glucose 1-phosphate, mannose 1-phosphate, ribose 1-phosphate and deoxyribose 1-phosphate, as acceptors. In vitro, also exhibits very low phosphopentomutase and phosphoglucomutase activity which are most probably not physiologically relevant. The protein is Glucose 1,6-bisphosphate synthase of Mus musculus (Mouse).